A 275-amino-acid polypeptide reads, in one-letter code: MTKVEYKHTHIAAKKKLGQNFLLDRNIPRKIVRESGIKEGDRVVEIGPGFGALTTAILEVMPSFTAIEKDRELAKFNREEHPQIELIEDDFLKVPLEPLAAGGKLSVLGNIPYSITSPILFRLLDNRHLIASATLMIQHEVAQRIAAVPGTKEYGILAVQMQAFCDVKYLFKVGRAVFKPRPDVDSAVIKMVPKAVDPVKDSEGFRTFVRRVFHQRRKTLLNNLKEYYDTSGVPEPTLKLRAESLSVPALITLFTQLKLIARGDASGQLLLKRRR.

Residues N20, L22, G47, E68, D90, and N110 each coordinate S-adenosyl-L-methionine.

Belongs to the class I-like SAM-binding methyltransferase superfamily. rRNA adenine N(6)-methyltransferase family. RsmA subfamily.

Its subcellular location is the cytoplasm. It catalyses the reaction adenosine(1518)/adenosine(1519) in 16S rRNA + 4 S-adenosyl-L-methionine = N(6)-dimethyladenosine(1518)/N(6)-dimethyladenosine(1519) in 16S rRNA + 4 S-adenosyl-L-homocysteine + 4 H(+). Functionally, specifically dimethylates two adjacent adenosines (A1518 and A1519) in the loop of a conserved hairpin near the 3'-end of 16S rRNA in the 30S particle. May play a critical role in biogenesis of 30S subunits. This is Ribosomal RNA small subunit methyltransferase A from Chlorobaculum tepidum (strain ATCC 49652 / DSM 12025 / NBRC 103806 / TLS) (Chlorobium tepidum).